Consider the following 530-residue polypeptide: Putative sulfate transporter YvdB (530 aa).

10 helical membrane passes run 19–39 (LIAG…FAIA), 41–61 (GVEP…ISLF), 68–88 (IGGP…QYGL), 91–111 (LLIA…FKLG), 121–141 (VIVG…IANF), 164–184 (LGTF…ILLV), 192–212 (VPGA…FFPD), 241–261 (MVML…ESIL), 313–333 (AVSP…LLVF), and 384–404 (VLFD…VFFI). In terms of domain architecture, STAS spans 420 to 530 (PVLAKREDPS…FFDHHDEITG (111 aa)).

Belongs to the SLC26A/SulP transporter (TC 2.A.53) family.

Its subcellular location is the cell membrane. The protein is Putative sulfate transporter YvdB (yvdB) of Bacillus subtilis (strain 168).